A 377-amino-acid chain; its full sequence is Gibberellin 20 oxidase 1 (377 aa).

The 101-residue stretch at 222–322 (ENDSIMRLNY…RKSLAFFLCP (101 aa)) folds into the Fe2OG dioxygenase domain. 3 residues coordinate Fe cation: His-247, Asp-249, and His-303. Arg-313 is a catalytic residue.

This sequence belongs to the iron/ascorbate-dependent oxidoreductase family. GA20OX subfamily. The cofactor is Fe(2+). L-ascorbate serves as cofactor. In terms of tissue distribution, highly expressed in stems and inflorescence tissues. Detected in seeds, roots, leaves and siliques.

It carries out the reaction gibberellin A12 + 2 2-oxoglutarate + 3 O2 + H(+) = gibberellin A9 + 2 succinate + 3 CO2 + 2 H2O. The enzyme catalyses gibberellin A12 + 2-oxoglutarate + O2 = gibberellin A15 + succinate + CO2. It catalyses the reaction gibberellin A15 + 2-oxoglutarate + O2 = gibberellin A24 + succinate + CO2 + H2O. The catalysed reaction is gibberellin A53 + 2-oxoglutarate + O2 = gibberellin A44 + succinate + CO2. It participates in plant hormone biosynthesis; gibberellin biosynthesis. Its function is as follows. Key oxidase enzyme in the biosynthesis of gibberellin that catalyzes the conversion of GA12 to GA9, via a three-step oxidation at C-20 of the GA skeleton. GA53 is less effectively oxidized than GA12 and is only oxidized one step to GA44. Involved in the promotion of the floral transition, fertility and silique elongation, but plays only a minor role in elongation of seedling organs. Acts redundantly with GA20OX2. The polypeptide is Gibberellin 20 oxidase 1 (GA20OX1) (Arabidopsis thaliana (Mouse-ear cress)).